The primary structure comprises 562 residues: Wee1-like protein kinase 2 (562 aa).

2 disordered regions span residues 1-86 and 161-181; these read MRTA…DKGV and YRQANFHPNGKRKERPEDDCS. Residues 35-48 are compositionally biased toward polar residues; sequence HSNQRGSPVNSWRA. Residues 217-491 form the Protein kinase domain; that stretch reads FLEIEKIGAG…AKNSLLRRCV (275 aa). ATP is bound by residues 223–231 and Lys246; that span reads IGAGEFGSV. The Proton acceptor role is filled by Asp344. Mg(2+)-binding residues include Asn349 and Asp381. Residues 494–520 are a coiled coil; that stretch reads AAQLQKQLNVEKFKTAMLERELKAAKL.

It belongs to the protein kinase superfamily. Ser/Thr protein kinase family. WEE1 subfamily.

The protein resides in the nucleus. The enzyme catalyses L-tyrosyl-[protein] + ATP = O-phospho-L-tyrosyl-[protein] + ADP + H(+). Oocyte-specific protein tyrosine kinase that phosphorylates and inhibits cdk1 and acts as a regulator of meiosis. Required to maintain meiotic arrest in oocytes by phosphorylating cdk1 at 'Tyr-15', leading to inhibit cdk1 activity and prevent meiotic reentry. The sequence is that of Wee1-like protein kinase 2 (wee2) from Xenopus tropicalis (Western clawed frog).